The primary structure comprises 95 residues: Small ribosomal subunit protein uS19 (95 aa).

It belongs to the universal ribosomal protein uS19 family.

In terms of biological role, protein S19 forms a complex with S13 that binds strongly to the 16S ribosomal RNA. The polypeptide is Small ribosomal subunit protein uS19 (Lactobacillus gasseri (strain ATCC 33323 / DSM 20243 / BCRC 14619 / CIP 102991 / JCM 1131 / KCTC 3163 / NCIMB 11718 / NCTC 13722 / AM63)).